Consider the following 393-residue polypeptide: Protein TsgA (393 aa).

The next 12 membrane-spanning stretches (helical) occupy residues 11–31, 51–71, 78–98, 101–121, 134–154, 162–182, 206–226, 245–265, 273–293, 297–317, 332–352, and 361–381; these read WISF…GMVM, FLNA…EIVP, FGFL…SLAL, AAMF…TFLI, LLFT…IAAF, WYWV…LTFG, IGVL…LGFI, TLVS…SFIL, ILTV…TGTP, AWSI…IITL, FVLT…GPIV, and LLTA…LGFV.

It belongs to the major facilitator superfamily. TsgA family.

It localises to the cell inner membrane. The sequence is that of Protein TsgA from Escherichia coli O7:K1 (strain IAI39 / ExPEC).